The sequence spans 60 residues: Large ribosomal subunit protein bL32 (60 aa).

Residues 1 to 16 (MAVPKRKTTPSKRGMR) show a composition bias toward basic residues. Residues 1–34 (MAVPKRKTTPSKRGMRRAHDALSSPVYIEDKDSG) form a disordered region.

This sequence belongs to the bacterial ribosomal protein bL32 family.

This Maricaulis maris (strain MCS10) (Caulobacter maris) protein is Large ribosomal subunit protein bL32.